A 269-amino-acid polypeptide reads, in one-letter code: 4-hydroxy-tetrahydrodipicolinate reductase (269 aa).

Residues 13–18 and Asp-39 contribute to the NAD(+) site; that span reads GASGRM. Arg-40 lines the NADP(+) pocket. NAD(+)-binding positions include 101–103 and 125–128; these read GTT and APNM. His-158 functions as the Proton donor/acceptor in the catalytic mechanism. A (S)-2,3,4,5-tetrahydrodipicolinate-binding site is contributed by His-159. The active-site Proton donor is Lys-162. Position 168–169 (168–169) interacts with (S)-2,3,4,5-tetrahydrodipicolinate; sequence GT.

This sequence belongs to the DapB family.

It localises to the cytoplasm. It carries out the reaction (S)-2,3,4,5-tetrahydrodipicolinate + NAD(+) + H2O = (2S,4S)-4-hydroxy-2,3,4,5-tetrahydrodipicolinate + NADH + H(+). The enzyme catalyses (S)-2,3,4,5-tetrahydrodipicolinate + NADP(+) + H2O = (2S,4S)-4-hydroxy-2,3,4,5-tetrahydrodipicolinate + NADPH + H(+). It participates in amino-acid biosynthesis; L-lysine biosynthesis via DAP pathway; (S)-tetrahydrodipicolinate from L-aspartate: step 4/4. Functionally, catalyzes the conversion of 4-hydroxy-tetrahydrodipicolinate (HTPA) to tetrahydrodipicolinate. The chain is 4-hydroxy-tetrahydrodipicolinate reductase from Bordetella pertussis (strain Tohama I / ATCC BAA-589 / NCTC 13251).